Here is a 356-residue protein sequence, read N- to C-terminus: Uroporphyrinogen decarboxylase (356 aa).

Coproporphyrinogen I-binding residues include arginine 33, alanine 35, arginine 37, arginine 46, aspartate 82, tyrosine 159, serine 214, and histidine 334. Residues arginine 33, alanine 35, and arginine 37 each contribute to the coproporphyrinogen III site. Coproporphyrinogen III contacts are provided by aspartate 82, tyrosine 159, serine 214, and histidine 334.

The protein belongs to the uroporphyrinogen decarboxylase family. Homodimer.

It localises to the cytoplasm. It is found in the cytosol. The enzyme catalyses uroporphyrinogen III + 4 H(+) = coproporphyrinogen III + 4 CO2. The protein operates within porphyrin-containing compound metabolism; protoporphyrin-IX biosynthesis; coproporphyrinogen-III from 5-aminolevulinate: step 4/4. Catalyzes the decarboxylation of four acetate groups of uroporphyrinogen-III to yield coproporphyrinogen-III. The chain is Uroporphyrinogen decarboxylase from Drosophila melanogaster (Fruit fly).